The sequence spans 278 residues: Protein saf1 (278 aa).

Disordered stretches follow at residues 1–43 (MLSK…RNMS), 81–210 (KKNI…DIEE), and 240–264 (QKLAKGQKIGQPDRDVSSQVQEDKD). Composition is skewed to basic and acidic residues over residues 22 to 38 (QIKVREERAKRHEERLS) and 90 to 103 (GRVESDKTKEAERQ). Composition is skewed to basic residues over residues 104-116 (HKPRKPFIPKNPK) and 169-183 (REKKNKSFKPKHHKK). Polar residues predominate over residues 186–202 (INASSAQPKSTTTTEAA).

It is found in the nucleus. Its subcellular location is the nucleolus. The polypeptide is Protein saf1 (saf1) (Schizosaccharomyces pombe (strain 972 / ATCC 24843) (Fission yeast)).